Consider the following 269-residue polypeptide: Formamidopyrimidine-DNA glycosylase (269 aa).

The active-site Schiff-base intermediate with DNA is P2. The active-site Proton donor is the E3. Residue K57 is the Proton donor; for beta-elimination activity of the active site. The DNA site is built by H90, R109, and K150. The FPG-type zinc finger occupies 235–269 (QVYGRKGEPCRVCGTPIVASKHAQRATFYCRQCQK). R259 serves as the catalytic Proton donor; for delta-elimination activity.

This sequence belongs to the FPG family. In terms of assembly, monomer. The cofactor is Zn(2+).

It carries out the reaction Hydrolysis of DNA containing ring-opened 7-methylguanine residues, releasing 2,6-diamino-4-hydroxy-5-(N-methyl)formamidopyrimidine.. The enzyme catalyses 2'-deoxyribonucleotide-(2'-deoxyribose 5'-phosphate)-2'-deoxyribonucleotide-DNA = a 3'-end 2'-deoxyribonucleotide-(2,3-dehydro-2,3-deoxyribose 5'-phosphate)-DNA + a 5'-end 5'-phospho-2'-deoxyribonucleoside-DNA + H(+). Its function is as follows. Involved in base excision repair of DNA damaged by oxidation or by mutagenic agents. Acts as a DNA glycosylase that recognizes and removes damaged bases. Has a preference for oxidized purines, such as 7,8-dihydro-8-oxoguanine (8-oxoG). Has AP (apurinic/apyrimidinic) lyase activity and introduces nicks in the DNA strand. Cleaves the DNA backbone by beta-delta elimination to generate a single-strand break at the site of the removed base with both 3'- and 5'-phosphates. The protein is Formamidopyrimidine-DNA glycosylase of Enterobacter sp. (strain 638).